The following is a 199-amino-acid chain: Recombination protein RecR (199 aa).

The C4-type zinc-finger motif lies at 56 to 71; it reads CATCGNVAQEELCNIC. The region spanning 79–174 is the Toprim domain; sequence SVICVVEEPK…KVTRLASGLP (96 aa).

This sequence belongs to the RecR family.

Its function is as follows. May play a role in DNA repair. It seems to be involved in an RecBC-independent recombinational process of DNA repair. It may act with RecF and RecO. This is Recombination protein RecR from Streptomyces avermitilis (strain ATCC 31267 / DSM 46492 / JCM 5070 / NBRC 14893 / NCIMB 12804 / NRRL 8165 / MA-4680).